A 711-amino-acid chain; its full sequence is Quinolinate synthase, chloroplastic (711 aa).

A chloroplast-targeting transit peptide spans Met1 to Arg41. Residues Pro17 to Ser63 are disordered. Cys114 functions as the Cysteine persulfide intermediate in the catalytic mechanism. Positions 263 and 289 each coordinate iminosuccinate. Residue Cys343 coordinates [4Fe-4S] cluster. Iminosuccinate is bound by residues Tyr372–Asn374 and Ser394. Cys467 contacts [4Fe-4S] cluster. Iminosuccinate contacts are provided by residues His493–Glu495 and Thr518. [4Fe-4S] cluster is bound at residue Cys631.

The protein belongs to the quinolinate synthase family. Type 1 subfamily. In terms of assembly, homodimer. [4Fe-4S] cluster is required as a cofactor.

Its subcellular location is the plastid. It is found in the chloroplast. It carries out the reaction iminosuccinate + dihydroxyacetone phosphate = quinolinate + phosphate + 2 H2O + H(+). Its pathway is cofactor biosynthesis; NAD(+) biosynthesis; quinolinate from iminoaspartate: step 1/1. In terms of biological role, catalyzes the condensation of iminoaspartate with dihydroxyacetone phosphate to form quinolinate. The chain is Quinolinate synthase, chloroplastic from Oryza sativa subsp. japonica (Rice).